The following is a 481-amino-acid chain: UDP-N-acetylmuramoyl-L-alanyl-D-glutamate--L-lysine ligase (481 aa).

Ser42 serves as a coordination point for UDP-N-acetyl-alpha-D-muramoyl-L-alanyl-D-glutamate. Position 118-124 (118-124) interacts with ATP; that stretch reads GTKGKTT. UDP-N-acetyl-alpha-D-muramoyl-L-alanyl-D-glutamate-binding positions include 160 to 161, Ser187, and Arg195; that span reads TT. Lys229 is subject to N6-carboxylysine. Residues 404-407 carry the L-lysine recognition motif motif; that stretch reads DDPN.

The protein belongs to the MurCDEF family. MurE subfamily. In terms of processing, carboxylation is probably crucial for Mg(2+) binding and, consequently, for the gamma-phosphate positioning of ATP.

It is found in the cytoplasm. The catalysed reaction is UDP-N-acetyl-alpha-D-muramoyl-L-alanyl-D-glutamate + L-lysine + ATP = UDP-N-acetyl-alpha-D-muramoyl-L-alanyl-gamma-D-glutamyl-L-lysine + ADP + phosphate + H(+). Its pathway is cell wall biogenesis; peptidoglycan biosynthesis. In terms of biological role, catalyzes the addition of L-lysine to the nucleotide precursor UDP-N-acetylmuramoyl-L-alanyl-D-glutamate (UMAG) in the biosynthesis of bacterial cell-wall peptidoglycan. In Streptococcus suis (strain 98HAH33), this protein is UDP-N-acetylmuramoyl-L-alanyl-D-glutamate--L-lysine ligase.